The sequence spans 203 residues: LexA repressor (203 aa).

Positions 32 to 52 (RAEICTAFGFRSPNAAETHLR) form a DNA-binding region, H-T-H motif. Catalysis depends on for autocatalytic cleavage activity residues S121 and K158.

Belongs to the peptidase S24 family. In terms of assembly, homodimer.

It catalyses the reaction Hydrolysis of Ala-|-Gly bond in repressor LexA.. Represses a number of genes involved in the response to DNA damage (SOS response), including recA and lexA. In the presence of single-stranded DNA, RecA interacts with LexA causing an autocatalytic cleavage which disrupts the DNA-binding part of LexA, leading to derepression of the SOS regulon and eventually DNA repair. This Aromatoleum aromaticum (strain DSM 19018 / LMG 30748 / EbN1) (Azoarcus sp. (strain EbN1)) protein is LexA repressor.